Here is a 565-residue protein sequence, read N- to C-terminus: Phosphomethylpyrimidine synthase (565 aa).

Residues Asn201, Met230, Tyr259, His295, 315–317 (SRG), 356–359 (DGLR), and Glu395 contribute to the substrate site. A Zn(2+)-binding site is contributed by His399. Residue Tyr422 coordinates substrate. Position 463 (His463) interacts with Zn(2+). Residues Cys543, Cys546, and Cys551 each contribute to the [4Fe-4S] cluster site.

It belongs to the ThiC family. In terms of assembly, homodimer. [4Fe-4S] cluster is required as a cofactor.

The enzyme catalyses 5-amino-1-(5-phospho-beta-D-ribosyl)imidazole + S-adenosyl-L-methionine = 4-amino-2-methyl-5-(phosphooxymethyl)pyrimidine + CO + 5'-deoxyadenosine + formate + L-methionine + 3 H(+). The protein operates within cofactor biosynthesis; thiamine diphosphate biosynthesis. Functionally, catalyzes the synthesis of the hydroxymethylpyrimidine phosphate (HMP-P) moiety of thiamine from aminoimidazole ribotide (AIR) in a radical S-adenosyl-L-methionine (SAM)-dependent reaction. This chain is Phosphomethylpyrimidine synthase, found in Ehrlichia canis (strain Jake).